The primary structure comprises 306 residues: MAGRYDSNPFEEDDVNPFSEQARGKAGGQPSYGGGAFYMPNPRNVPSMSSNSRLSPLPPEPAAFGATVDIPLDSSKDLKNREKELQAREAELNKREKELKRREEAAARAGIVIEEKNWPPFLPLIHHDITNEIPSHLQRMQYVAFASFLGLACCLFWNVIAVTSAWVKGEGVKIWLLAIIYFISGVPGAYVLWYRPLYNAMRTDSALKFGLFFLVYLFHILFCVFSAVAPPVVFEGKSLAGILPAIDLISKNALVGIFYFVGFGLFCVESLLSIWVIQQVYMYFRGSGKAAEMKRDATRGAMRAAF.

Residues 1-60 (MAGRYDSNPFEEDDVNPFSEQARGKAGGQPSYGGGAFYMPNPRNVPSMSSNSRLSPLPPE) are disordered. At 1 to 141 (MAGRYDSNPF…EIPSHLQRMQ (141 aa)) the chain is on the cytoplasmic side. Over residues 25 to 36 (KAGGQPSYGGGA) the composition is skewed to gly residues. Residues 44 to 54 (NVPSMSSNSRL) are compositionally biased toward polar residues. Positions 72–109 (LDSSKDLKNREKELQAREAELNKREKELKRREEAAARA) form a coiled coil. 4 helical membrane passes run 142–162 (YVAF…VIAV), 174–194 (IWLL…VLWY), 209–229 (FGLF…SAVA), and 257–277 (IFYF…IWVI). Residues 278–306 (QQVYMYFRGSGKAAEMKRDATRGAMRAAF) lie on the Cytoplasmic side of the membrane.

This sequence belongs to the SCAMP family.

It localises to the cell membrane. Its subcellular location is the cytoplasmic vesicle. The protein localises to the secretory vesicle membrane. In terms of biological role, probably involved in membrane trafficking. This chain is Putative secretory carrier-associated membrane protein 1 (SCAMP1), found in Oryza sativa subsp. indica (Rice).